We begin with the raw amino-acid sequence, 172 residues long: FMN reductase (NADH) RutF 2 (172 aa).

This sequence belongs to the non-flavoprotein flavin reductase family. RutF subfamily.

It carries out the reaction FMNH2 + NAD(+) = FMN + NADH + 2 H(+). Catalyzes the reduction of FMN to FMNH2 which is used to reduce pyrimidine by RutA via the Rut pathway. The protein is FMN reductase (NADH) RutF 2 of Methylorubrum extorquens (strain PA1) (Methylobacterium extorquens).